A 129-amino-acid chain; its full sequence is Small ribosomal subunit protein uS11 (129 aa).

The protein belongs to the universal ribosomal protein uS11 family. As to quaternary structure, part of the 30S ribosomal subunit. Interacts with proteins S7 and S18. Binds to IF-3.

Functionally, located on the platform of the 30S subunit, it bridges several disparate RNA helices of the 16S rRNA. Forms part of the Shine-Dalgarno cleft in the 70S ribosome. The protein is Small ribosomal subunit protein uS11 of Thermosipho melanesiensis (strain DSM 12029 / CIP 104789 / BI429).